Consider the following 336-residue polypeptide: NADH-quinone oxidoreductase subunit H (336 aa).

8 helical membrane-spanning segments follow: residues 17–37, 85–105, 116–136, 154–174, 190–210, 247–267, 274–294, and 309–329; these read WFII…TYAI, ALFT…LAVM, LGIG…GVIT, AAQM…IVLL, VWNI…AQAE, VYMF…WLPI, IPGI…QFWI, and FAWK…AVVV.

The protein belongs to the complex I subunit 1 family. NDH-1 is composed of 14 different subunits. Subunits NuoA, H, J, K, L, M, N constitute the membrane sector of the complex.

It localises to the cell membrane. It carries out the reaction a quinone + NADH + 5 H(+)(in) = a quinol + NAD(+) + 4 H(+)(out). Its function is as follows. NDH-1 shuttles electrons from NADH, via FMN and iron-sulfur (Fe-S) centers, to quinones in the respiratory chain. The immediate electron acceptor for the enzyme in this species is believed to be ubiquinone. Couples the redox reaction to proton translocation (for every two electrons transferred, four hydrogen ions are translocated across the cytoplasmic membrane), and thus conserves the redox energy in a proton gradient. This subunit may bind ubiquinone. The chain is NADH-quinone oxidoreductase subunit H from Brevibacillus brevis (strain 47 / JCM 6285 / NBRC 100599).